A 301-amino-acid polypeptide reads, in one-letter code: Sulfate adenylyltransferase subunit 2 (301 aa).

The tract at residues 278 to 301 is disordered; that stretch reads ERQGRLIDGDEPASMERKKREGYF.

This sequence belongs to the PAPS reductase family. CysD subfamily. As to quaternary structure, sulfate-activating enzymes, NodP and NodQ, may be physically associated.

It carries out the reaction sulfate + ATP + H(+) = adenosine 5'-phosphosulfate + diphosphate. Functionally, proposed to provide activated sulfate for transfer to nod factor. This chain is Sulfate adenylyltransferase subunit 2 (nodP), found in Azospirillum brasilense.